A 68-amino-acid chain; its full sequence is DNA-directed RNA polymerase subunit Rpo10 (68 aa).

Cys7, Cys10, Cys44, and Cys45 together coordinate Zn(2+).

This sequence belongs to the archaeal Rpo10/eukaryotic RPB10 RNA polymerase subunit family. In terms of assembly, part of the RNA polymerase complex. The cofactor is Zn(2+).

The protein resides in the cytoplasm. It carries out the reaction RNA(n) + a ribonucleoside 5'-triphosphate = RNA(n+1) + diphosphate. Its function is as follows. DNA-dependent RNA polymerase (RNAP) catalyzes the transcription of DNA into RNA using the four ribonucleoside triphosphates as substrates. This Methanococcus maripaludis (strain C7 / ATCC BAA-1331) protein is DNA-directed RNA polymerase subunit Rpo10.